We begin with the raw amino-acid sequence, 267 residues long: Probable ribose-5-phosphate isomerase 1 (267 aa).

Residue Gly2 is modified to N-acetylglycine. The residue at position 92 (Ser92) is a Phosphoserine.

It belongs to the ribose 5-phosphate isomerase family. As to expression, expressed in roots, cotyledons, leaves and flowers.

The protein resides in the cytoplasm. The enzyme catalyses aldehydo-D-ribose 5-phosphate = D-ribulose 5-phosphate. It functions in the pathway carbohydrate degradation; pentose phosphate pathway; D-ribose 5-phosphate from D-ribulose 5-phosphate (non-oxidative stage): step 1/1. Catalyzes the reversible conversion of ribose-5-phosphate to ribulose 5-phosphate. This chain is Probable ribose-5-phosphate isomerase 1 (RPI1), found in Arabidopsis thaliana (Mouse-ear cress).